The chain runs to 414 residues: Serine--tRNA ligase (414 aa).

230 to 232 (TSE) contacts L-serine. 261–263 (RQE) is an ATP binding site. L-serine is bound at residue glutamate 284. An ATP-binding site is contributed by 348-351 (EISS). L-serine is bound at residue serine 382.

The protein belongs to the class-II aminoacyl-tRNA synthetase family. Type-1 seryl-tRNA synthetase subfamily. Homodimer. The tRNA molecule binds across the dimer.

Its subcellular location is the cytoplasm. The enzyme catalyses tRNA(Ser) + L-serine + ATP = L-seryl-tRNA(Ser) + AMP + diphosphate + H(+). It catalyses the reaction tRNA(Sec) + L-serine + ATP = L-seryl-tRNA(Sec) + AMP + diphosphate + H(+). It functions in the pathway aminoacyl-tRNA biosynthesis; selenocysteinyl-tRNA(Sec) biosynthesis; L-seryl-tRNA(Sec) from L-serine and tRNA(Sec): step 1/1. In terms of biological role, catalyzes the attachment of serine to tRNA(Ser). Is also able to aminoacylate tRNA(Sec) with serine, to form the misacylated tRNA L-seryl-tRNA(Sec), which will be further converted into selenocysteinyl-tRNA(Sec). This is Serine--tRNA ligase from Campylobacter concisus (strain 13826).